Consider the following 883-residue polypeptide: Glutamate receptor 2 (883 aa).

The first 24 residues, 1–24 (MQKIMHISVLLSPVLWGLIFGVSS), serve as a signal peptide directing secretion. At 25–543 (NSIQIGGLFP…GVFSFLDPLA (519 aa)) the chain is on the extracellular side. C78 and C330 are disulfide-bonded. Residues N256, N370, N406, and N413 are each glycosylated (N-linked (GlcNAc...) asparagine). Residues P499, T501, and R506 each coordinate L-glutamate. The helical transmembrane segment at 544–564 (YEIWMCIVFAYIGVSVVLFLV) threads the bilayer. Residues 565 to 591 (SRFSPYEWHTEEFEDGRETQSSESTNE) are Cytoplasmic-facing. Positions 592–607 (FGIFNSLWFSLGAFMQ) form an intramembrane region, helical; Pore-forming. An intramembrane segment occupies 608-610 (QGC). C610 is lipidated: S-palmitoyl cysteine. Over 611–616 (DISPRS) the chain is Cytoplasmic. A helical transmembrane segment spans residues 617–637 (LSGRIVGGVWWFFTLIIISSY). At 638–812 (TANLAAFLTV…EKTSALSLSN (175 aa)) the chain is on the extracellular side. L-glutamate is bound by residues S675 and T676. The residue at position 683 (S683) is a Phosphoserine; by PKC. Residue S717 is modified to Phosphoserine; by PKG. E726 lines the L-glutamate pocket. Cysteines 739 and 794 form a disulfide. A helical membrane pass occupies residues 813 to 833 (VAGVFYILVGGLGLAMLVALI). Residues 834-883 (EFCYKSRAEAKRMKVAKNAQNINPSSSQNSQNFATYKEGYNVYGIESVKI) are Cytoplasmic-facing. C836 carries the S-palmitoyl cysteine lipid modification. Phosphoserine is present on residues S860 and S863. Positions 867-877 (ATYKEGYNVYG) are required for interaction with IQSEC1. A Phosphotyrosine modification is found at Y876. Phosphoserine is present on S880.

Belongs to the glutamate-gated ion channel (TC 1.A.10.1) family. GRIA2 subfamily. As to quaternary structure, homotetramer or heterotetramer of pore-forming glutamate receptor subunits. Tetramers may be formed by the dimerization of dimers. May interact with MPP4. Forms a ternary complex with GRIP1 and CSPG4. Interacts with ATAD1 in an ATP-dependent manner. ATAD1-catalyzed ATP hydrolysis disrupts binding to ATAD1 and to GRIP1 and leads to AMPAR complex disassembly. Interacts with GRIP1 and GRIP2. Interacts with NSF via its C-terminus. Isoform 1, but not isoform 3, interacts with PICK1. Interacts with CACNG2. Interacts with GRIA1 and SYNDIG1. Part of a complex containing GRIA2, NSF and NAPA and/or NAPB. Interacts with SNX27 (via PDZ domain); the interaction is required for recycling to the plasma membrane when endocytosed and prevent degradation in lysosomes. Interacts with LRFN1. Found in a complex with GRIA1, GRIA3, GRIA4, CNIH2, CNIH3, CACNG2, CACNG3, CACNG4, CACNG5, CACNG7 and CACNG8. Interacts with CACNG5. Interacts with OLFM2. Interacts with AP4B1, AP4E1 and AP4M1; probably indirect it mediates the somatodendritic localization of GRIA2 in neurons. Forms a complex with GRIP1, NSG1 and STX12; controls the intracellular fate of AMPAR and the endosomal sorting of the GRIA2 subunit toward recycling and membrane targeting. Interacts with IQSEC1; the interaction is required for ARF6 activation. Interacts (heterotetramer form) with CNIH2 and CNIH3; this interaction promotes expression at the plasma membrane and extensively modulates their gating properties by slowing deactivation and desensitization kinetics. Post-translationally, palmitoylated. Depalmitoylated upon L-glutamate stimulation. ZDHHC3/GODZ specifically palmitoylates Cys-610, which leads to Golgi retention and decreased cell surface expression. In contrast, Cys-836 palmitoylation does not affect cell surface expression but regulates stimulation-dependent endocytosis. N-glycosylated. In terms of processing, ubiquitinated by RNF167, leading to its degradation. Post-translationally, phosphorylation at Tyr-876 is required for interaction with IQSEC1 and ARF6 activation, which in turn triggers AMPAR internalization for persistent synaptic depression. As to expression, detected in brain cortex, hippocampus and cerebellum (at protein level). Detected in hippocampus.

The protein resides in the cell membrane. It is found in the postsynaptic cell membrane. The protein localises to the postsynaptic density membrane. It catalyses the reaction Ca(2+)(in) = Ca(2+)(out). The enzyme catalyses Na(+)(in) = Na(+)(out). In terms of biological role, ionotropic glutamate receptor that functions as a ligand-gated cation channel, gated by L-glutamate and glutamatergic agonists such as alpha-amino-3-hydroxy-5-methyl-4-isoxazolepropionic acid (AMPA), quisqualic acid, and kainic acid. L-glutamate acts as an excitatory neurotransmitter at many synapses in the central nervous system and plays an important role in fast excitatory synaptic transmission. Binding of the excitatory neurotransmitter L-glutamate induces a conformation change, leading to the opening of the cation channel, and thereby converts the chemical signal to an electrical impulse upon entry of monovalent and divalent cations such as sodium and calcium. The receptor then desensitizes rapidly and enters in a transient inactive state, characterized by the presence of bound agonist. In the presence of CACNG4 or CACNG7 or CACNG8, shows resensitization which is characterized by a delayed accumulation of current flux upon continued application of L-glutamate. Through complex formation with NSG1, GRIP1 and STX12 controls the intracellular fate of AMPAR and the endosomal sorting of the GRIA2 subunit toward recycling and membrane targeting. This is Glutamate receptor 2 from Mus musculus (Mouse).